The chain runs to 73 residues: Protein SlyX homolog (73 aa).

It belongs to the SlyX family.

In Histophilus somni (strain 2336) (Haemophilus somnus), this protein is Protein SlyX homolog.